The primary structure comprises 401 residues: NADH-quinone oxidoreductase subunit D 2 (401 aa).

It belongs to the complex I 49 kDa subunit family. As to quaternary structure, NDH-1 is composed of 14 different subunits. Subunits NuoB, C, D, E, F, and G constitute the peripheral sector of the complex.

The protein localises to the cell inner membrane. It catalyses the reaction a quinone + NADH + 5 H(+)(in) = a quinol + NAD(+) + 4 H(+)(out). NDH-1 shuttles electrons from NADH, via FMN and iron-sulfur (Fe-S) centers, to quinones in the respiratory chain. The immediate electron acceptor for the enzyme in this species is believed to be ubiquinone. Couples the redox reaction to proton translocation (for every two electrons transferred, four hydrogen ions are translocated across the cytoplasmic membrane), and thus conserves the redox energy in a proton gradient. The sequence is that of NADH-quinone oxidoreductase subunit D 2 from Thermodesulfovibrio yellowstonii (strain ATCC 51303 / DSM 11347 / YP87).